Here is a 485-residue protein sequence, read N- to C-terminus: Glutamyl-tRNA(Gln) amidotransferase subunit A (485 aa).

Catalysis depends on charge relay system residues K78 and S153. S177 (acyl-ester intermediate) is an active-site residue.

This sequence belongs to the amidase family. GatA subfamily. Heterotrimer of A, B and C subunits.

It catalyses the reaction L-glutamyl-tRNA(Gln) + L-glutamine + ATP + H2O = L-glutaminyl-tRNA(Gln) + L-glutamate + ADP + phosphate + H(+). Allows the formation of correctly charged Gln-tRNA(Gln) through the transamidation of misacylated Glu-tRNA(Gln) in organisms which lack glutaminyl-tRNA synthetase. The reaction takes place in the presence of glutamine and ATP through an activated gamma-phospho-Glu-tRNA(Gln). The sequence is that of Glutamyl-tRNA(Gln) amidotransferase subunit A from Geotalea daltonii (strain DSM 22248 / JCM 15807 / FRC-32) (Geobacter daltonii).